The sequence spans 521 residues: Bifunctional purine biosynthesis protein PurH (521 aa).

The region spanning 1 to 149 (MSDPVIKRAL…KNNESVTVVT (149 aa)) is the MGS-like domain.

It belongs to the PurH family.

It catalyses the reaction (6R)-10-formyltetrahydrofolate + 5-amino-1-(5-phospho-beta-D-ribosyl)imidazole-4-carboxamide = 5-formamido-1-(5-phospho-D-ribosyl)imidazole-4-carboxamide + (6S)-5,6,7,8-tetrahydrofolate. The enzyme catalyses IMP + H2O = 5-formamido-1-(5-phospho-D-ribosyl)imidazole-4-carboxamide. Its pathway is purine metabolism; IMP biosynthesis via de novo pathway; 5-formamido-1-(5-phospho-D-ribosyl)imidazole-4-carboxamide from 5-amino-1-(5-phospho-D-ribosyl)imidazole-4-carboxamide (10-formyl THF route): step 1/1. It participates in purine metabolism; IMP biosynthesis via de novo pathway; IMP from 5-formamido-1-(5-phospho-D-ribosyl)imidazole-4-carboxamide: step 1/1. The protein is Bifunctional purine biosynthesis protein PurH of Chlorobium phaeobacteroides (strain DSM 266 / SMG 266 / 2430).